We begin with the raw amino-acid sequence, 446 residues long: ATP-dependent RNA helicase SUB2 (446 aa).

Serine 2 carries the post-translational modification N-acetylserine. Residues serine 13 and serine 37 each carry the phosphoserine modification. The span at 23–41 (ASKAAEAGETGAATSATEG) shows a compositional bias: low complexity. The tract at residues 23-52 (ASKAAEAGETGAATSATEGDNNNNTAAGDK) is disordered. Residues 62–90 (TGFKDFLLKPELSRAIIDCGFEHPSEVQQ) carry the Q motif motif. The 176-residue stretch at 93-268 (IPQSIHGTDV…RRFLQNPLEI (176 aa)) folds into the Helicase ATP-binding domain. 106–113 (AKSGLGKT) is a binding site for ATP. Threonine 169 bears the Phosphothreonine mark. The DECD box signature appears at 215–218 (DECD). In terms of domain architecture, Helicase C-terminal spans 280-441 (GLQQYYIKLE…EFPEEGIDPS (162 aa)).

This sequence belongs to the DEAD box helicase family. DECD subfamily. As to quaternary structure, component of the TREX complex composed of at least SUB2, TEX1, YRA1 and the four THO complex components: HPR1, MFT1, THO2 and THP1. Interacts with HPR1, YRA1, and YRA2. SUB2 may mediate the interaction between the THO complex and YRA1. Associates with growing mRNP complexes during transcription. This association requires the presence of HPR1. Also interacts with SAC3. Interacts with THO1 in the presence of RNA; this interaction facilitates RNA binding of SUB2.

It is found in the nucleus. The enzyme catalyses ATP + H2O = ADP + phosphate + H(+). In terms of biological role, ATP-binding RNA helicase component of the TREX complex involved in transcription elongation and required for the export of mRNA out of the nucleus. SUB2 also plays a role in pre-mRNA splicing and spliceosome assembly. May be involved in rDNA and telomeric silencing, and maintenance of genome integrity. Associates with THO1, which facilitates RNA binding of SUB2 and likely plays a role in mRNA export. The chain is ATP-dependent RNA helicase SUB2 (SUB2) from Saccharomyces cerevisiae (strain ATCC 204508 / S288c) (Baker's yeast).